Here is a 318-residue protein sequence, read N- to C-terminus: Ubiquinone biosynthesis protein COQ9, mitochondrial (318 aa).

Residues 1–44 (MAAAAVSGALGRAGWRLLQLRCLPVARCRQALVPRAFHASAVGL) constitute a mitochondrion transit peptide. The SIFI-degron signature appears at 16–31 (RLLQLRCLPVARCRQA). Positions 44–98 (LRSSDEQKQQPPNSFSQQHSETQGAEKPDPESSHSPPRYTDQGGEEEEDYESEEQ) are disordered. The segment covering 52–66 (QQPPNSFSQQHSETQ) has biased composition (polar residues). Acidic residues predominate over residues 86–97 (GGEEEEDYESEE). K175 carries the post-translational modification N6-acetyllysine. Position 244 (R244) interacts with a 1,2-diacylglycero-3-phosphoethanolamine.

The protein belongs to the COQ9 family. Homodimer. Heterodimer; two heterodimers of COQ7:COQ9 come together on the same side of the lipid pseudo-bilayer and form a curved tetramer with a hydrophobic surface suitable for membrane interaction. These two tetramers assemble into a soluble octamer with a pseudo-bilayer of lipids captured within. Interacts with COQ7; this interaction allows ubiquinone (CoQ) isoprene intermediates presentation to COQ7 and facilitates the COQ7-mediated hydroxylase step. In terms of processing, in response to mitochondrial stress, the precursor protein is ubiquitinated by the SIFI complex in the cytoplasm before mitochondrial import, leading to its degradation. Within the SIFI complex, UBR4 initiates ubiquitin chain that are further elongated or branched by KCMF1.

It is found in the mitochondrion. It participates in cofactor biosynthesis; ubiquinone biosynthesis. In terms of biological role, membrane-associated protein that warps the membrane surface to access and bind aromatic isoprenes with high specificity, including ubiquinone (CoQ) isoprene intermediates and presents them directly to COQ7, therefore facilitating the COQ7-mediated hydroxylase step. Participates in the biosynthesis of coenzyme Q, also named ubiquinone, an essential lipid-soluble electron transporter for aerobic cellular respiration. The polypeptide is Ubiquinone biosynthesis protein COQ9, mitochondrial (Homo sapiens (Human)).